A 522-amino-acid polypeptide reads, in one-letter code: 5,6-dihydroxyindole-2-carboxylic acid oxidase (522 aa).

A signal peptide spans methionine 1 to alanine 21. Over glutamine 22–threonine 470 the chain is Lumenal, melanosome. 5 disulfides stabilise this stretch: cysteine 27-cysteine 38, cysteine 39-cysteine 59, cysteine 50-cysteine 89, cysteine 91-cysteine 100, and cysteine 103-cysteine 112. Asparagine 164 and asparagine 171 each carry an N-linked (GlcNAc...) asparagine glycan. Residues histidine 182, histidine 205, and histidine 214 each coordinate Zn(2+). 2 disulfides stabilise this stretch: cysteine 248–cysteine 251 and cysteine 280–cysteine 293. Asparagine 294 is a glycosylation site (N-linked (GlcNAc...) asparagine). Histidine 367 and histidine 371 together coordinate Zn(2+). An N-linked (GlcNAc...) asparagine glycan is attached at asparagine 375. Histidine 394 contributes to the Zn(2+) binding site. The chain crosses the membrane as a helical span at residues valine 471 to valine 491. Residues histidine 492–valine 522 are Cytoplasmic-facing.

This sequence belongs to the tyrosinase family. Cu(2+) is required as a cofactor. Requires Zn(2+) as cofactor.

It localises to the melanosome membrane. It carries out the reaction 2 5,6-dihydroxyindole-2-carboxylate + O2 = 2 indole-5,6-quinone-2-carboxylate + 2 H2O. It participates in pigment biosynthesis; melanin biosynthesis. Its function is as follows. Plays a role in melanin biosynthesis. Catalyzes the oxidation of 5,6-dihydroxyindole-2-carboxylic acid (DHICA) into indole-5,6-quinone-2-carboxylic acid. May regulate or influence the type of melanin synthesized. Also to a lower extent, capable of hydroxylating tyrosine and producing melanin. The polypeptide is 5,6-dihydroxyindole-2-carboxylic acid oxidase (tyrp1) (Carassius auratus (Goldfish)).